We begin with the raw amino-acid sequence, 1880 residues long: Nonribosomal peptide synthetase otaB (1880 aa).

The tract at residues 205 to 594 is adenylation 1; it reads AQAVERGNSI…SVSFVGRRQA (390 aa). The 77-residue stretch at 728-804 folds into the Carrier domain; it reads LPLSPLERQI…ELGAHLEQEA (77 aa). Ser765 bears the O-(pantetheine 4'-phosphoryl)serine mark. Residues 840 to 1250 are condensation; it reads EDVYPCTALQ…LLSPQDQQQL (411 aa). An adenylation 2 region spans residues 1269–1665; that stretch reads QRQCLAHPQK…GRKDRQVKLR (397 aa).

Belongs to the NRP synthetase family.

It catalyses the reaction 7-carboxymellein + L-phenylalanine + ATP = ochratoxin B + ADP + phosphate + H(+). Its pathway is mycotoxin biosynthesis. Its function is as follows. Nonribosomal peptide synthetase; part of the gene cluster that mediates the biosynthesis of ochratoxin A (OTA), a mycotoxin composed of a chlorinated type I polyketide dihydroisocoumarin moiety linked to L-phenylalanine, and demonstrated to have nephrotoxic, immunotoxic, genotoxic, neurotoxic, and teratogenic properties. OtaB is responsible for the linking of phenylalanine to the dihydroisocoumarin ring. The pathway begins with the highly reducing polyketide synthase otaA that catalyzes the formation of the isocoumarin group during the initial stages of biosynthesis, starting from one acetate and 4 malonate units, to originate the characteristic pentaketide skeleton 7-methylmellein (7-MM) of the OTA molecule. The newly identified cyclase otaY might be involved in the polyketide cyclization reaction during the initial steps of the OTA biosynthesis. 7-MM is then oxidized into 7-carboxymellein (also called ochratoxin beta) by the cytochrome P450 monooxygenase otaC. The NRPS encoded by the otaB gene is involved in the linking of phenylalanine to the dihydroisocoumarin ring. The reaction catalyzed by NRPS results in the production of ochratoxin B (OTB), which is the non-chlorinated analog of OTA and which subsequently serves as the substrate of the halogenase otaD for chlorination activity to form the final molecular structure of OTA, containing a chlorine atom in the C-5 position of the molecule. This chain is Nonribosomal peptide synthetase otaB, found in Aspergillus niger (strain ATCC MYA-4892 / CBS 513.88 / FGSC A1513).